A 475-amino-acid chain; its full sequence is Tryptophan synthase beta chain 2, chloroplastic (475 aa).

Positions Met-1–Leu-21 are enriched in polar residues. The interval Met-1 to Ser-44 is disordered. The transit peptide at Met-1–Cys-51 directs the protein to the chloroplast. An N-acetylthreonine modification is found at Thr-52. Lys-170 is modified (N6-(pyridoxal phosphate)lysine).

It belongs to the TrpB family. In terms of assembly, tetramer of two alpha and two beta chains. It depends on pyridoxal 5'-phosphate as a cofactor.

The protein resides in the plastid. It is found in the chloroplast. The enzyme catalyses (1S,2R)-1-C-(indol-3-yl)glycerol 3-phosphate + L-serine = D-glyceraldehyde 3-phosphate + L-tryptophan + H2O. The protein operates within amino-acid biosynthesis; L-tryptophan biosynthesis; L-tryptophan from chorismate: step 5/5. Its function is as follows. The beta subunit is responsible for the synthesis of L-tryptophan from indole and L-serine. The sequence is that of Tryptophan synthase beta chain 2, chloroplastic (TSB2) from Arabidopsis thaliana (Mouse-ear cress).